The sequence spans 469 residues: Citrate synthase, mitochondrial (469 aa).

Residues 1–30 (MSFLSVSRLAPKLLNSKNATYFLVAARNAS) constitute a mitochondrion transit peptide. Active-site residues include histidine 304 and histidine 350. Residue arginine 359 participates in oxaloacetate binding. Aspartate 405 is an active-site residue. Oxaloacetate-binding residues include arginine 431 and arginine 451.

This sequence belongs to the citrate synthase family. In terms of assembly, homodimer.

It is found in the mitochondrion matrix. It carries out the reaction oxaloacetate + acetyl-CoA + H2O = citrate + CoA + H(+). The protein operates within carbohydrate metabolism; tricarboxylic acid cycle; isocitrate from oxaloacetate: step 1/2. Functionally, key enzyme of the Krebs tricarboxylic acid cycle which catalyzes the synthesis of citrate from acetyl coenzyme A and oxaloacetate. The protein is Citrate synthase, mitochondrial (cs) of Katsuwonus pelamis (Skipjack tuna).